The sequence spans 346 residues: Putative D-threonate 4-phosphate dehydrogenase (346 aa).

Positions 141 and 142 each coordinate substrate. A divalent metal cation-binding residues include His171, His215, and His270. Substrate-binding residues include Lys278 and Arg296.

It belongs to the PdxA family. PdxA2 subfamily. Homodimer. It depends on a divalent metal cation as a cofactor.

The enzyme catalyses 4-O-phospho-D-threonate + NAD(+) = dihydroxyacetone phosphate + CO2 + NADH. Its function is as follows. Catalyzes the NAD-dependent oxidation and subsequent decarboxylation of D-threonate 4-phosphate to produce dihydroxyacetone phosphate (DHAP). The chain is Putative D-threonate 4-phosphate dehydrogenase from Cutibacterium acnes (strain DSM 16379 / KPA171202) (Propionibacterium acnes).